The sequence spans 626 residues: Two-component response regulator ORR24 (626 aa).

A disordered region spans residues 1-22; that stretch reads MTVEERQGRVGGHGVSGGGGGR. Residues 9-22 are compositionally biased toward gly residues; that stretch reads RVGGHGVSGGGGGR. Positions 30–145 constitute a Response regulatory domain; sequence RVLAVDDDPT…QLRTIWQHVI (116 aa). Position 81 is a 4-aspartylphosphate (Asp-81). The segment covering 151–162 has biased composition (basic and acidic residues); it reads DAKNRGNDDDAG. Disordered stretches follow at residues 151–215 and 402–440; these read DAKN…KKPR and PLESSNQQHLSRVHSSSADPFSTLVGESPQFPDLGRTTN. Residues 191–202 are compositionally biased toward acidic residues; it reads NGDDGDDSDENS. Residues 210–269 constitute a DNA-binding region (myb-like GARP); the sequence is TQKKPRVVWSVELHRKFVAAVNQLGIEKAVPKKILDLMNVENITRENVASHLQKYRLYLK. Over residues 402 to 421 the composition is skewed to polar residues; it reads PLESSNQQHLSRVHSSSADP.

The protein belongs to the ARR family. Type-B subfamily. Post-translationally, two-component system major event consists of a His-to-Asp phosphorelay between a sensor histidine kinase (HK) and a response regulator (RR). In plants, the His-to-Asp phosphorelay involves an additional intermediate named Histidine-containing phosphotransfer protein (HPt). This multistep phosphorelay consists of a His-Asp-His-Asp sequential transfer of a phosphate group between first a His and an Asp of the HK protein, followed by the transfer to a conserved His of the HPt protein and finally the transfer to an Asp in the receiver domain of the RR protein.

The protein resides in the nucleus. In terms of biological role, transcriptional activator that binds specific DNA sequence. Functions as a response regulator involved in His-to-Asp phosphorelay signal transduction system. Phosphorylation of the Asp residue in the receiver domain activates the ability of the protein to promote the transcription of target genes. May directly activate some type-A response regulators in response to cytokinins. The polypeptide is Two-component response regulator ORR24 (Oryza sativa subsp. japonica (Rice)).